Here is a 239-residue protein sequence, read N- to C-terminus: Aspartate/glutamate leucyltransferase (239 aa).

It belongs to the R-transferase family. Bpt subfamily.

The protein localises to the cytoplasm. It carries out the reaction N-terminal L-glutamyl-[protein] + L-leucyl-tRNA(Leu) = N-terminal L-leucyl-L-glutamyl-[protein] + tRNA(Leu) + H(+). The catalysed reaction is N-terminal L-aspartyl-[protein] + L-leucyl-tRNA(Leu) = N-terminal L-leucyl-L-aspartyl-[protein] + tRNA(Leu) + H(+). In terms of biological role, functions in the N-end rule pathway of protein degradation where it conjugates Leu from its aminoacyl-tRNA to the N-termini of proteins containing an N-terminal aspartate or glutamate. The protein is Aspartate/glutamate leucyltransferase of Campylobacter jejuni subsp. jejuni serotype O:6 (strain 81116 / NCTC 11828).